The chain runs to 329 residues: Glucokinase (329 aa).

An ATP-binding site is contributed by 13 to 18 (GDIGGT).

The protein belongs to the bacterial glucokinase family.

It localises to the cytoplasm. It carries out the reaction D-glucose + ATP = D-glucose 6-phosphate + ADP + H(+). This is Glucokinase from Caulobacter sp. (strain K31).